Consider the following 59-residue polypeptide: Photosystem II reaction center protein K (59 aa).

A propeptide spanning residues 1–22 (MLNIFSLICLNSALYPSSLFFA) is cleaved from the precursor. The chain crosses the membrane as a helical span at residues 38–58 (MPVIPLFFFLLAFVWQAAVSF).

The protein belongs to the PsbK family. As to quaternary structure, PSII is composed of 1 copy each of membrane proteins PsbA, PsbB, PsbC, PsbD, PsbE, PsbF, PsbH, PsbI, PsbJ, PsbK, PsbL, PsbM, PsbT, PsbX, PsbY, PsbZ, Psb30/Ycf12, at least 3 peripheral proteins of the oxygen-evolving complex and a large number of cofactors. It forms dimeric complexes.

The protein resides in the plastid. Its subcellular location is the chloroplast thylakoid membrane. Functionally, one of the components of the core complex of photosystem II (PSII). PSII is a light-driven water:plastoquinone oxidoreductase that uses light energy to abstract electrons from H(2)O, generating O(2) and a proton gradient subsequently used for ATP formation. It consists of a core antenna complex that captures photons, and an electron transfer chain that converts photonic excitation into a charge separation. The polypeptide is Photosystem II reaction center protein K (Lactuca sativa (Garden lettuce)).